Consider the following 293-residue polypeptide: Elongation factor Ts (293 aa).

The interval 80–83 is involved in Mg(2+) ion dislocation from EF-Tu; it reads TDFV.

This sequence belongs to the EF-Ts family.

The protein resides in the cytoplasm. In terms of biological role, associates with the EF-Tu.GDP complex and induces the exchange of GDP to GTP. It remains bound to the aminoacyl-tRNA.EF-Tu.GTP complex up to the GTP hydrolysis stage on the ribosome. This chain is Elongation factor Ts, found in Burkholderia vietnamiensis (strain G4 / LMG 22486) (Burkholderia cepacia (strain R1808)).